A 914-amino-acid polypeptide reads, in one-letter code: Dynamin-2A (914 aa).

At Met1 the chain carries N-acetylmethionine. The Dynamin-type G domain maps to 35-303 (PATFLNVVAL…IRSRMKLRLP (269 aa)). Residues 45–52 (GNVGAGKS) form a G1 motif region. 45–52 (GNVGAGKS) lines the GTP pocket. Residues 71–73 (ATR) form a G2 motif region. Positions 143 to 146 (DLPG) are G3 motif. Residues 143 to 147 (DLPGL) and 204 to 207 (GKID) contribute to the GTP site. A G4 motif region spans residues 204 to 207 (GKID). The segment at 238–241 (AVIG) is G5 motif. Over residues 507–522 (RREEELKGRSSKKGQD) the composition is skewed to basic and acidic residues. Disordered regions lie at residues 507-570 (RREE…TAGP) and 629-648 (PEDE…NGPD). Over residues 523–535 (AEQSLLSRATSPQ) the composition is skewed to polar residues. Composition is skewed to basic and acidic residues over residues 547–560 (SMKD…KETP) and 634–645 (EKSKSSKDKKAN). The region spanning 572-696 (GEITAGYLMK…WINKLQKVIQ (125 aa)) is the PH domain. The GED domain occupies 730–823 (LRWMSQEVRG…QLSIHDNRAA (94 aa)). Residues 781–805 (NERIESLIQEDQNVKRRRERYQKQS) are a coiled coil. The tract at residues 821-914 (RAAAASSYSD…PPPTGSAYRY (94 aa)) is disordered. Composition is skewed to polar residues over residues 826–839 (SSYS…SSPR) and 852–866 (AFNS…SLSK).

It belongs to the TRAFAC class dynamin-like GTPase superfamily. Dynamin/Fzo/YdjA family. In terms of assembly, binds PtdIns3P. Interacts with SH3P3 (via SH3 domain) and (via C-terminus) with GAMMA-ADR. May homooligomerize or heterooligomerize.

It localises to the cytoplasm. The protein resides in the cytosol. Its subcellular location is the golgi apparatus membrane. It is found in the cytoskeleton. The protein localises to the phragmoplast. It localises to the cytoplasmic vesicle. The protein resides in the clathrin-coated vesicle. It catalyses the reaction GTP + H2O = GDP + phosphate + H(+). Increased GTPase activity in the presence of phosphatidic acid. In terms of biological role, microtubule-associated force-producing protein involved in clathrin-mediated vesicle trafficking from the trans-Golgi network to the central vacuole. Able to bind and hydrolyze GTP. Binds specifically to phosphatidylinositol 3-phosphate (PtdIns3P). The chain is Dynamin-2A (DRP2A) from Arabidopsis thaliana (Mouse-ear cress).